The sequence spans 242 residues: Ubiquinone biosynthesis O-methyltransferase (242 aa).

The S-adenosyl-L-methionine site is built by arginine 44, glycine 64, aspartate 85, and methionine 129.

It belongs to the methyltransferase superfamily. UbiG/COQ3 family.

The enzyme catalyses a 3-demethylubiquinol + S-adenosyl-L-methionine = a ubiquinol + S-adenosyl-L-homocysteine + H(+). It carries out the reaction a 3-(all-trans-polyprenyl)benzene-1,2-diol + S-adenosyl-L-methionine = a 2-methoxy-6-(all-trans-polyprenyl)phenol + S-adenosyl-L-homocysteine + H(+). Its pathway is cofactor biosynthesis; ubiquinone biosynthesis. Its function is as follows. O-methyltransferase that catalyzes the 2 O-methylation steps in the ubiquinone biosynthetic pathway. In Salmonella agona (strain SL483), this protein is Ubiquinone biosynthesis O-methyltransferase.